A 336-amino-acid chain; its full sequence is D-alanine--D-alanine ligase (336 aa).

Residues 124-330 form the ATP-grasp domain; it reads KMWFSALGIP…FTEYLSLVIK (207 aa). Residue 154 to 209 participates in ATP binding; the sequence is ALENWGSIFVKAASQGSSVGCYKVDDSSKVAGVLKDAFGYAPYVIVEKTIKARELE. Mg(2+) contacts are provided by Asp284, Glu297, and Asn299.

This sequence belongs to the D-alanine--D-alanine ligase family. Requires Mg(2+) as cofactor. Mn(2+) serves as cofactor.

The protein localises to the cytoplasm. The catalysed reaction is 2 D-alanine + ATP = D-alanyl-D-alanine + ADP + phosphate + H(+). It participates in cell wall biogenesis; peptidoglycan biosynthesis. Functionally, cell wall formation. This Shewanella sp. (strain MR-7) protein is D-alanine--D-alanine ligase.